We begin with the raw amino-acid sequence, 283 residues long: Protein/nucleic acid deglycase HchA (283 aa).

Zn(2+) contacts are provided by His-86, Glu-91, and His-123. The Nucleophile role is filled by Cys-185.

The protein belongs to the peptidase C56 family. HchA subfamily. In terms of assembly, homodimer.

The protein localises to the cytoplasm. It carries out the reaction N(omega)-(1-hydroxy-2-oxopropyl)-L-arginyl-[protein] + H2O = lactate + L-arginyl-[protein] + H(+). It catalyses the reaction N(6)-(1-hydroxy-2-oxopropyl)-L-lysyl-[protein] + H2O = lactate + L-lysyl-[protein] + H(+). The enzyme catalyses S-(1-hydroxy-2-oxopropyl)-L-cysteinyl-[protein] + H2O = lactate + L-cysteinyl-[protein] + H(+). The catalysed reaction is N(omega)-(1-hydroxy-2-oxoethyl)-L-arginyl-[protein] + H2O = L-arginyl-[protein] + glycolate + H(+). It carries out the reaction N(6)-(1-hydroxy-2-oxoethyl)-L-lysyl-[protein] + H2O = glycolate + L-lysyl-[protein] + H(+). It catalyses the reaction S-(1-hydroxy-2-oxoethyl)-L-cysteinyl-[protein] + H2O = glycolate + L-cysteinyl-[protein] + H(+). The enzyme catalyses N(2)-(1-hydroxy-2-oxopropyl)-dGTP + H2O = lactate + dGTP + H(+). The catalysed reaction is N(2)-(1-hydroxy-2-oxopropyl)-GTP + H2O = lactate + GTP + H(+). It carries out the reaction N(2)-(1-hydroxy-2-oxopropyl)-GDP + H2O = lactate + GDP + H(+). It catalyses the reaction N(2)-(1-hydroxy-2-oxopropyl)-GMP + H2O = lactate + GMP + H(+). The enzyme catalyses N(2)-(1-hydroxy-2-oxoethyl)-dGTP + H2O = dGTP + glycolate + H(+). The catalysed reaction is N(2)-(1-hydroxy-2-oxoethyl)-GTP + H2O = glycolate + GTP + H(+). It carries out the reaction N(2)-(1-hydroxy-2-oxoethyl)-GDP + H2O = glycolate + GDP + H(+). It catalyses the reaction N(2)-(1-hydroxy-2-oxoethyl)-GMP + H2O = glycolate + GMP + H(+). The enzyme catalyses an N(2)-(1-hydroxy-2-oxopropyl)-guanosine in RNA + H2O = a guanosine in RNA + lactate + H(+). The catalysed reaction is an N(2)-(1-hydroxy-2-oxopropyl)-2'-deoxyguanosine in DNA + H2O = a 2'-deoxyguanosine in DNA + lactate + H(+). It carries out the reaction an N(2)-(1-hydroxy-2-oxoethyl)-guanosine in RNA + H2O = a guanosine in RNA + glycolate + H(+). It catalyses the reaction an N(2)-(1-hydroxy-2-oxoethyl)-2'-deoxyguanosine in DNA + H2O = a 2'-deoxyguanosine in DNA + glycolate + H(+). Its function is as follows. Protein and nucleotide deglycase that catalyzes the deglycation of the Maillard adducts formed between amino groups of proteins or nucleotides and reactive carbonyl groups of glyoxals. Thus, functions as a protein deglycase that repairs methylglyoxal- and glyoxal-glycated proteins, and releases repaired proteins and lactate or glycolate, respectively. Deglycates cysteine, arginine and lysine residues in proteins, and thus reactivates these proteins by reversing glycation by glyoxals. Acts on early glycation intermediates (hemithioacetals and aminocarbinols), preventing the formation of Schiff bases and advanced glycation endproducts (AGE). Also functions as a nucleotide deglycase able to repair glycated guanine in the free nucleotide pool (GTP, GDP, GMP, dGTP) and in DNA and RNA. Is thus involved in a major nucleotide repair system named guanine glycation repair (GG repair), dedicated to reversing methylglyoxal and glyoxal damage via nucleotide sanitization and direct nucleic acid repair. Plays an important role in protecting cells from carbonyl stress. The polypeptide is Protein/nucleic acid deglycase HchA (Escherichia coli O157:H7).